The chain runs to 634 residues: Probable LRR receptor-like serine/threonine-protein kinase At2g23950 (634 aa).

The first 27 residues, 1 to 27 (MVVMKLITMKIFSVLLLLCFFVTCSLS), serve as a signal peptide directing secretion. The Extracellular segment spans residues 28 to 236 (SEPRNPEVEA…SSGRRTNILA (209 aa)). Residues N96 and N109 are each glycosylated (N-linked (GlcNAc...) asparagine). 4 LRR repeats span residues 99–121 (NLRQ…ICSL), 123–145 (KLQT…VNQL), 147–167 (NLQY…ASLS), and 171–193 (HLSF…PART). N-linked (GlcNAc...) asparagine glycosylation is present at N155. The chain crosses the membrane as a helical span at residues 237-257 (VALGVSLGFAVSVILSLGFIW). The Cytoplasmic segment spans residues 258 to 634 (YRKKQRRLTM…SFAMELSGPR (377 aa)). T296 carries the post-translational modification Phosphothreonine. A Protein kinase domain is found at 299-554 (FSSKSILGAG…QVALLCTQFL (256 aa)). 305 to 313 (LGAGGFGNV) contacts ATP. Phosphothreonine is present on T322. K327 contacts ATP. Phosphoserine is present on residues S380 and S383. T395 carries the phosphothreonine modification. The active-site Proton acceptor is D422. T455, T456, and T461 each carry phosphothreonine. Position 469 is a phosphotyrosine (Y469). Phosphoserine is present on S471. T472 carries the post-translational modification Phosphothreonine. S476 is modified (phosphoserine). T551 is modified (phosphothreonine).

It belongs to the protein kinase superfamily. Ser/Thr protein kinase family.

The protein localises to the membrane. The catalysed reaction is L-seryl-[protein] + ATP = O-phospho-L-seryl-[protein] + ADP + H(+). It carries out the reaction L-threonyl-[protein] + ATP = O-phospho-L-threonyl-[protein] + ADP + H(+). The protein is Probable LRR receptor-like serine/threonine-protein kinase At2g23950 of Arabidopsis thaliana (Mouse-ear cress).